The primary structure comprises 59 residues: Large ribosomal subunit protein bL32 (59 aa).

The segment at 1–59 (MAVQQNKKSPSKRGMHRSHDFLTTAPIAVEPTTGEVHLRHHVSPNGYYRGRKVVKTKND) is disordered. Over residues 49 to 59 (RGRKVVKTKND) the composition is skewed to basic residues.

The protein belongs to the bacterial ribosomal protein bL32 family.

The protein is Large ribosomal subunit protein bL32 of Ralstonia pickettii (strain 12J).